The sequence spans 349 residues: tRNA N6-adenosine threonylcarbamoyltransferase (349 aa).

Residues H117 and H121 each coordinate Fe cation. Substrate-binding positions include Q139–G143, D172, G185, D189, and N278. D310 contributes to the Fe cation binding site.

The protein belongs to the KAE1 / TsaD family. Requires Fe(2+) as cofactor.

It localises to the cytoplasm. It catalyses the reaction L-threonylcarbamoyladenylate + adenosine(37) in tRNA = N(6)-L-threonylcarbamoyladenosine(37) in tRNA + AMP + H(+). Required for the formation of a threonylcarbamoyl group on adenosine at position 37 (t(6)A37) in tRNAs that read codons beginning with adenine. Is involved in the transfer of the threonylcarbamoyl moiety of threonylcarbamoyl-AMP (TC-AMP) to the N6 group of A37, together with TsaE and TsaB. TsaD likely plays a direct catalytic role in this reaction. The chain is tRNA N6-adenosine threonylcarbamoyltransferase from Lactobacillus acidophilus (strain ATCC 700396 / NCK56 / N2 / NCFM).